The chain runs to 1222 residues: ATP-dependent helicase/nuclease subunit A (1222 aa).

The 457-residue stretch at 39 to 495 folds into the UvrD-like helicase ATP-binding domain; that stretch reads QKRTAQQIEA…ILLKENFRSQ (457 aa). 60–67 contributes to the ATP binding site; that stretch reads ASAGSGKT. Positions 524-810 constitute a UvrD-like helicase C-terminal domain; it reads QLIAGSHAQT…NLMTIHKSKG (287 aa).

Belongs to the helicase family. AddA subfamily. As to quaternary structure, heterodimer of AddA and AddB/RexB. Mg(2+) is required as a cofactor.

The enzyme catalyses Couples ATP hydrolysis with the unwinding of duplex DNA by translocating in the 3'-5' direction.. The catalysed reaction is ATP + H2O = ADP + phosphate + H(+). Functionally, the heterodimer acts as both an ATP-dependent DNA helicase and an ATP-dependent, dual-direction single-stranded exonuclease. Recognizes the chi site generating a DNA molecule suitable for the initiation of homologous recombination. The AddA nuclease domain is required for chi fragment generation; this subunit has the helicase and 3' -&gt; 5' nuclease activities. In Streptococcus pyogenes serotype M3 (strain ATCC BAA-595 / MGAS315), this protein is ATP-dependent helicase/nuclease subunit A.